The sequence spans 457 residues: Glutamate--tRNA ligase 2 (457 aa).

The 'HIGH' region motif lies at 9–19 (PSPTGRIHIGN). The short motif at 250–254 (GLSKR) is the 'KMSKS' region element. ATP is bound at residue lysine 253.

Belongs to the class-I aminoacyl-tRNA synthetase family. Glutamate--tRNA ligase type 1 subfamily. Monomer.

The protein localises to the cytoplasm. It carries out the reaction tRNA(Glu) + L-glutamate + ATP = L-glutamyl-tRNA(Glu) + AMP + diphosphate. Functionally, catalyzes the attachment of glutamate to tRNA(Glu) in a two-step reaction: glutamate is first activated by ATP to form Glu-AMP and then transferred to the acceptor end of tRNA(Glu). This chain is Glutamate--tRNA ligase 2, found in Mesorhizobium japonicum (strain LMG 29417 / CECT 9101 / MAFF 303099) (Mesorhizobium loti (strain MAFF 303099)).